The sequence spans 108 residues: Small ribosomal subunit protein bS6 (108 aa).

The protein belongs to the bacterial ribosomal protein bS6 family.

In terms of biological role, binds together with bS18 to 16S ribosomal RNA. The sequence is that of Small ribosomal subunit protein bS6 from Nostoc sp. (strain PCC 7120 / SAG 25.82 / UTEX 2576).